The sequence spans 527 residues: EGF domain-specific O-linked N-acetylglucosamine transferase (527 aa).

Residues Met-1–Gln-19 form the signal peptide. The Required for optimal activity signature appears at Asp-295–Asp-297. Asn-354 carries an N-linked (GlcNAc...) asparagine glycan. A Prevents secretion from ER motif is present at residues His-524–Leu-527.

It belongs to the glycosyltransferase 61 family. As to expression, widely expressed. Expressed in brain, heart, kidney, lung, skeletal muscles and thymus. Highest expression is observed in lung and the lowest in skeletal muscles.

It localises to the endoplasmic reticulum lumen. The enzyme catalyses L-seryl-[protein] + UDP-N-acetyl-alpha-D-glucosamine = 3-O-(N-acetyl-beta-D-glucosaminyl)-L-seryl-[protein] + UDP + H(+). It catalyses the reaction L-threonyl-[protein] + UDP-N-acetyl-alpha-D-glucosamine = 3-O-(N-acetyl-beta-D-glucosaminyl)-L-threonyl-[protein] + UDP + H(+). In terms of biological role, catalyzes the transfer of a single N-acetylglucosamine from UDP-GlcNAc to a serine or threonine residue in extracellular proteins resulting in their modification with a beta-linked N-acetylglucosamine (O-GlcNAc). Specifically glycosylates the Thr residue located between the fifth and sixth conserved cysteines of folded EGF-like domains. The protein is EGF domain-specific O-linked N-acetylglucosamine transferase (Eogt) of Mus musculus (Mouse).